Reading from the N-terminus, the 578-residue chain is Arginine--tRNA ligase (578 aa).

Positions 122–132 match the 'HIGH' region motif; that stretch reads PNLAKEMHVGH.

This sequence belongs to the class-I aminoacyl-tRNA synthetase family. Monomer.

It localises to the cytoplasm. It carries out the reaction tRNA(Arg) + L-arginine + ATP = L-arginyl-tRNA(Arg) + AMP + diphosphate. The protein is Arginine--tRNA ligase of Pseudoalteromonas atlantica (strain T6c / ATCC BAA-1087).